A 411-amino-acid chain; its full sequence is Fructose-1,6-bisphosphatase, chloroplastic (411 aa).

The N-terminal 53 residues, 1-53 (MAATAGATPSSHLLLSSSRHVAASPQPRILFPSLSGKRVAVGKNHHATGVRCM), are a transit peptide targeting the chloroplast. Glutamate 133, glutamate 162, aspartate 183, leucine 185, and aspartate 186 together coordinate Mg(2+). 186 to 189 (DGSS) contributes to the substrate binding site. Cysteines 227 and 232 form a disulfide. Residues asparagine 291, tyrosine 323, tyrosine 341, tyrosine 343, and lysine 353 each coordinate substrate. Glutamate 359 lines the Mg(2+) pocket.

Belongs to the FBPase class 1 family. In terms of assembly, homotetramer. The cofactor is Mg(2+).

Its subcellular location is the plastid. It localises to the chloroplast stroma. It carries out the reaction beta-D-fructose 1,6-bisphosphate + H2O = beta-D-fructose 6-phosphate + phosphate. Its pathway is carbohydrate biosynthesis; Calvin cycle. This Brassica napus (Rape) protein is Fructose-1,6-bisphosphatase, chloroplastic (FBP).